Here is a 202-residue protein sequence, read N- to C-terminus: NADH-quinone oxidoreductase subunit C (202 aa).

This sequence belongs to the complex I 30 kDa subunit family. As to quaternary structure, NDH-1 is composed of 14 different subunits. Subunits NuoB, C, D, E, F, and G constitute the peripheral sector of the complex.

The protein resides in the cell inner membrane. The catalysed reaction is a quinone + NADH + 5 H(+)(in) = a quinol + NAD(+) + 4 H(+)(out). NDH-1 shuttles electrons from NADH, via FMN and iron-sulfur (Fe-S) centers, to quinones in the respiratory chain. The immediate electron acceptor for the enzyme in this species is believed to be ubiquinone. Couples the redox reaction to proton translocation (for every two electrons transferred, four hydrogen ions are translocated across the cytoplasmic membrane), and thus conserves the redox energy in a proton gradient. The chain is NADH-quinone oxidoreductase subunit C from Paracidovorax citrulli (strain AAC00-1) (Acidovorax citrulli).